Reading from the N-terminus, the 78-residue chain is Probable [Fe-S]-dependent transcriptional repressor (78 aa).

The iron-sulfur cluster site is built by cysteine 56, cysteine 61, cysteine 64, and cysteine 70.

This sequence belongs to the FeoC family.

May function as a transcriptional regulator that controls feoABC expression. The chain is Probable [Fe-S]-dependent transcriptional repressor from Escherichia coli O9:H4 (strain HS).